A 297-amino-acid chain; its full sequence is MSELQSQPKKIAVVTGASGGIGYEVTKELARNGYLVYACARRLEPMAQLAIQFGNDSIKPYKLDISKPEEIVTFSGFLRANLPDGKLDLLYNNAGQSCTFPALDATDAAVEQCFKVNVFGHINMCRELSEFLIKAKGTIVFTGSLAGVVSFPFGSIYSASKAAIHQYARGLHLEMKPFNVRVINAITGGVATDIADKRPLPETSIYNFPEGREAFNSRKTMAKDNKPMPADAYAKQLVKDILSTSDPVDVYRGTFANIMRFVMIFVPYWLLEKGLSKKFKLDKVNNALKSKQKNKDD.

A GXSXG motif is present at residues 16-20; sequence GASGG. Ser-18 serves as the catalytic Nucleophile; for lipase activity. Residues Ile-21, Asp-64, Asn-93, Arg-126, Tyr-157, Lys-161, Val-190, and Thr-192 each contribute to the NADP(+) site. The active-site Proton acceptor is the Tyr-157. The active-site Lowers pKa of active site Tyr is Lys-161.

This sequence belongs to the short-chain dehydrogenases/reductases (SDR) family.

The protein resides in the lipid droplet. It localises to the mitochondrion outer membrane. Its subcellular location is the endoplasmic reticulum. It catalyses the reaction a 1-acylglycerone 3-phosphate + NADPH + H(+) = a 1-acyl-sn-glycero-3-phosphate + NADP(+). The catalysed reaction is 1-hexadecanoyl-sn-glycero-3-phosphate + NADP(+) = 1-hexadecanoylglycerone 3-phosphate + NADPH + H(+). The enzyme catalyses a triacylglycerol + H2O = a diacylglycerol + a fatty acid + H(+). It carries out the reaction 1,2,3-tri-(9Z-octadecenoyl)-glycerol + H2O = di-(9Z)-octadecenoylglycerol + (9Z)-octadecenoate + H(+). With respect to regulation, inhibited by divalent cations and N-ethylmaleimide. Activity is reduced under anaerobic growth conditions. Its function is as follows. Can convert acyl and alkyl dihydroxyacetone-phosphate (DHAP) into glycerolipids and ether lipids, respectively. Required for the biosynthesis of phosphatidic acid via the DHAP pathway, where it reduces 1-acyl DHAP to lysophosphatidic acid (LPA). Also has triacylglycerol (TAG) lipase activity. Involved in the mobilization of the non-polar storage lipids triacylglycerols (TAGs) from lipid particles by hydrolysis of TAGs. Required for spore germination. Plays a role in cell wall biogenesis, but this effect may be indirect by affecting the activities of cell wall synthesis enzymes. Lipolysis of TAG by AYR1 is essential for starvation-induced autophagy. Forms an NADPH-regulated cation-selective channel in the mitochondrial outer membrane. The polypeptide is NADPH-dependent 1-acyldihydroxyacetone phosphate reductase (Saccharomyces cerevisiae (strain ATCC 204508 / S288c) (Baker's yeast)).